A 174-amino-acid polypeptide reads, in one-letter code: RNA pyrophosphohydrolase (174 aa).

The Nudix hydrolase domain occupies 6-149 (GFRANVGIII…KRDVYRKVMK (144 aa)). The Nudix box motif lies at 38 to 59 (GGVDDGETAEEAMYRELYEEVG).

This sequence belongs to the Nudix hydrolase family. RppH subfamily. It depends on a divalent metal cation as a cofactor.

Accelerates the degradation of transcripts by removing pyrophosphate from the 5'-end of triphosphorylated RNA, leading to a more labile monophosphorylated state that can stimulate subsequent ribonuclease cleavage. This chain is RNA pyrophosphohydrolase, found in Shewanella sp. (strain MR-7).